A 241-amino-acid chain; its full sequence is Pyridoxine 5'-phosphate synthase (241 aa).

Asn7 is a 3-amino-2-oxopropyl phosphate binding site. 9 to 10 (DH) is a binding site for 1-deoxy-D-xylulose 5-phosphate. Arg18 is a binding site for 3-amino-2-oxopropyl phosphate. The active-site Proton acceptor is the His43. 1-deoxy-D-xylulose 5-phosphate-binding residues include Arg45 and His50. Catalysis depends on Glu70, which acts as the Proton acceptor. Residue Thr100 coordinates 1-deoxy-D-xylulose 5-phosphate. Residue His191 is the Proton donor of the active site. 3-amino-2-oxopropyl phosphate-binding positions include Ser192 and 213–214 (GH).

The protein belongs to the PNP synthase family. Homooctamer; tetramer of dimers.

The protein resides in the cytoplasm. It catalyses the reaction 3-amino-2-oxopropyl phosphate + 1-deoxy-D-xylulose 5-phosphate = pyridoxine 5'-phosphate + phosphate + 2 H2O + H(+). The protein operates within cofactor biosynthesis; pyridoxine 5'-phosphate biosynthesis; pyridoxine 5'-phosphate from D-erythrose 4-phosphate: step 5/5. Its function is as follows. Catalyzes the complicated ring closure reaction between the two acyclic compounds 1-deoxy-D-xylulose-5-phosphate (DXP) and 3-amino-2-oxopropyl phosphate (1-amino-acetone-3-phosphate or AAP) to form pyridoxine 5'-phosphate (PNP) and inorganic phosphate. This Nitrosomonas eutropha (strain DSM 101675 / C91 / Nm57) protein is Pyridoxine 5'-phosphate synthase.